The sequence spans 127 residues: QFAKPEDAVKYRQSALTLMASHFGRMTPVVKGQAPYDAAQIKANVEVLKTLSALPWAAFGPGTEGGDARPEIWSDAASFKQKQQAFQDNIVKLSAAADAGDLDKLRAAFGDVGASCKACHDAYRKKK.

Q1 carries the post-translational modification Pyrrolidone carboxylic acid. Heme c-binding residues include R12, Q13, D67, C116, C119, and H120.

In terms of assembly, homodimer. Post-translationally, binds 1 heme c group covalently per subunit.

It is found in the periplasm. Functionally, cytochrome c' is the most widely occurring bacterial c-type cytochrome. Cytochromes c' are high-spin proteins and the heme has no sixth ligand. Their exact function is not known. The chain is Cytochrome c' from Alcaligenes xylosoxydans xylosoxydans (Achromobacter xylosoxidans).